Reading from the N-terminus, the 707-residue chain is Polyribonucleotide nucleotidyltransferase (707 aa).

Residues Asp487 and Asp493 each contribute to the Mg(2+) site. The 60-residue stretch at 554–613 folds into the KH domain; it reads PSMATIKIDPDKIRDVIGKGGATIRKICDDTGASIDLDDDGTVRIYAEDKTAAKAAIDTV. Positions 623–691 constitute an S1 motif domain; sequence GKLYRGTVAR…NRNRVKLSIK (69 aa).

It belongs to the polyribonucleotide nucleotidyltransferase family. As to quaternary structure, component of the RNA degradosome, which is a multiprotein complex involved in RNA processing and mRNA degradation. Mg(2+) serves as cofactor.

The protein resides in the cytoplasm. It carries out the reaction RNA(n+1) + phosphate = RNA(n) + a ribonucleoside 5'-diphosphate. In terms of biological role, involved in mRNA degradation. Catalyzes the phosphorolysis of single-stranded polyribonucleotides processively in the 3'- to 5'-direction. This Chromohalobacter salexigens (strain ATCC BAA-138 / DSM 3043 / CIP 106854 / NCIMB 13768 / 1H11) protein is Polyribonucleotide nucleotidyltransferase.